A 217-amino-acid polypeptide reads, in one-letter code: MKIVGADGQEQEETDIPFRLWRKFAARRKLQYQSWEEGKEVLLNKLDRNLLTDFKAFAARFSSRPRPSKIFGTSLSEAISGEGNGQSGRGAARNHPRARTRCGATSPNHGGRVVPVPVAAASPGAPKKADEAAYRVRGRGRLITRRAGAAHTQPAAIDLGGGFGHCAQEEKEAPFSQARAPAITRGNRGQRGRKRRCGATNGGFQQPTGANQAWQRR.

Disordered stretches follow at residues 79–113 (ISGE…GGRV) and 171–217 (KEAP…WQRR). Residues 188–197 (RGQRGRKRRC) show a composition bias toward basic residues. Polar residues predominate over residues 202–217 (GGFQQPTGANQAWQRR).

The protein belongs to the adenoviridae U exon protein family.

It is found in the host nucleus. Its subcellular location is the host nucleoplasm. The protein resides in the host nucleolus. Its function is as follows. Might play a role in viral replication since it is associated with viral replication centers. Seems to have an effect on DBP localization. The polypeptide is U exon protein (Human adenovirus C serotype 5 (HAdV-5)).